Here is a 351-residue protein sequence, read N- to C-terminus: 3-hydroxy-4-methyl-anthranilyl-[aryl-carrier protein] 5-monooxygenase (351 aa).

Belongs to the aromatic-ring hydroxylase family. FAD is required as a cofactor.

The enzyme catalyses 3-hydroxy-4-methylanthranilyl-[aryl-carrier protein] + NADH + O2 + H(+) = 3,5-dihydroxy-4-methylanthranilyl-[aryl-carrier protein] + NAD(+) + H2O. The protein operates within antibiotic biosynthesis. In terms of biological role, involved in the biosynthesis of the antitumor antibiotic sibiromycin. Hydroxylates the C5 position of the peptidyl carrier protein (PCP)-bound 4-methyl-3-hydroxyanthranilic acid (4-MHA or 3H4MAA), leading to the formation of the fully substituted anthranilate moiety found in sibiromycin. The polypeptide is 3-hydroxy-4-methyl-anthranilyl-[aryl-carrier protein] 5-monooxygenase (Streptosporangium sibiricum).